We begin with the raw amino-acid sequence, 345 residues long: Annexin A9 (345 aa).

Annexin repeat units follow at residues 41-112 (FSVD…ALLQ), 113-184 (PTAQ…ALAK), 197-266 (NLAE…GLAS), and 270-341 (NTPL…ALCR).

This sequence belongs to the annexin family. Homodimer. Expressed in the stratified squamous skin epithelium, but not in epithelia of other types (at protein level).

Its function is as follows. Low affinity receptor for acetylcholine known to be targeted by disease-causing pemphigus vulgaris antibodies in keratinocytes. The chain is Annexin A9 (ANXA9) from Homo sapiens (Human).